Reading from the N-terminus, the 123-residue chain is Small ribosomal subunit protein uS17 (123 aa).

Belongs to the universal ribosomal protein uS17 family. In terms of assembly, part of the 30S ribosomal subunit.

Functionally, one of the primary rRNA binding proteins, it binds specifically to the 5'-end of 16S ribosomal RNA. In Pyrobaculum aerophilum (strain ATCC 51768 / DSM 7523 / JCM 9630 / CIP 104966 / NBRC 100827 / IM2), this protein is Small ribosomal subunit protein uS17.